Consider the following 121-residue polypeptide: Large ribosomal subunit protein bL12 (121 aa).

It belongs to the bacterial ribosomal protein bL12 family. Homodimer. Part of the ribosomal stalk of the 50S ribosomal subunit. Forms a multimeric L10(L12)X complex, where L10 forms an elongated spine to which 2 to 4 L12 dimers bind in a sequential fashion. Binds GTP-bound translation factors.

Its function is as follows. Forms part of the ribosomal stalk which helps the ribosome interact with GTP-bound translation factors. Is thus essential for accurate translation. In Clostridium novyi (strain NT), this protein is Large ribosomal subunit protein bL12.